A 126-amino-acid chain; its full sequence is Protein ApaG (126 aa).

Residues 2–126 (SALDNSIRVE…FRLATPGLLH (125 aa)) enclose the ApaG domain.

This chain is Protein ApaG, found in Shewanella oneidensis (strain ATCC 700550 / JCM 31522 / CIP 106686 / LMG 19005 / NCIMB 14063 / MR-1).